Reading from the N-terminus, the 1070-residue chain is DNA-directed RNA polymerase subunit beta (1070 aa).

The protein belongs to the RNA polymerase beta chain family. In terms of assembly, in plastids the minimal PEP RNA polymerase catalytic core is composed of four subunits: alpha, beta, beta', and beta''. When a (nuclear-encoded) sigma factor is associated with the core the holoenzyme is formed, which can initiate transcription.

The protein localises to the plastid. Its subcellular location is the chloroplast. The catalysed reaction is RNA(n) + a ribonucleoside 5'-triphosphate = RNA(n+1) + diphosphate. In terms of biological role, DNA-dependent RNA polymerase catalyzes the transcription of DNA into RNA using the four ribonucleoside triphosphates as substrates. The polypeptide is DNA-directed RNA polymerase subunit beta (Chloranthus spicatus (Chulantree)).